Here is a 91-residue protein sequence, read N- to C-terminus: Small ribosomal subunit protein uS15 (91 aa).

The protein belongs to the universal ribosomal protein uS15 family. As to quaternary structure, part of the 30S ribosomal subunit. Forms a bridge to the 50S subunit in the 70S ribosome, contacting the 23S rRNA.

One of the primary rRNA binding proteins, it binds directly to 16S rRNA where it helps nucleate assembly of the platform of the 30S subunit by binding and bridging several RNA helices of the 16S rRNA. Functionally, forms an intersubunit bridge (bridge B4) with the 23S rRNA of the 50S subunit in the ribosome. The chain is Small ribosomal subunit protein uS15 from Hydrogenobaculum sp. (strain Y04AAS1).